The primary structure comprises 310 residues: Serine protease 30 (310 aa).

The signal sequence occupies residues 1–21 (MESRARCIFLLLLQILTRARG). A propeptide spans 22–36 (DILPSVCGHSRDAGK) (activation peptide). The 241-residue stretch at 37 to 277 (IVGGQDALEG…YVDWIQRILA (241 aa)) folds into the Peptidase S1 domain. Cysteine 63 and cysteine 79 are joined by a disulfide. Catalysis depends on charge relay system residues histidine 78 and aspartate 128. Cystine bridges form between cysteine 161–cysteine 235, cysteine 191–cysteine 214, and cysteine 225–cysteine 253. Serine 229 (charge relay system) is an active-site residue. Residues asparagine 238 and asparagine 279 are each glycosylated (N-linked (GlcNAc...) asparagine). A lipid anchor (GPI-anchor amidated serine) is attached at serine 281. The propeptide at 282–310 (DAYGYHSSASAAYQMLLPVLLAVALPGSL) is removed in mature form.

The protein belongs to the peptidase S1 family. As to expression, expressed primarily in distal gut.

The protein localises to the cell membrane. Its activity is regulated as follows. Inhibited by aprotinin, leupeptin, benzamidine and soybean trypsin inhibitor. Partially inhibited by PMSF and DFP. Its function is as follows. Selectively cleaves synthetic peptide substrates of trypsin. Activates the epithelial sodium channel ENaC. This chain is Serine protease 30 (Prss30), found in Mus musculus (Mouse).